The following is a 372-amino-acid chain: 3,5-dihydroxyphenylacetyl-CoA synthase (372 aa).

The active site involves C160.

It belongs to the thiolase-like superfamily. Chalcone/stilbene synthases family.

It catalyses the reaction 4 malonyl-CoA + 4 H(+) = (3,5-dihydroxyphenyl)acetyl-CoA + 4 CO2 + 3 CoA + H2O. The protein operates within antibiotic biosynthesis. In terms of biological role, involved in the biosynthesis of the nonproteinogenic amino acid monomer (S)-3,5-dihydroxyphenylglycine (Dpg) responsible of the production of balhimycin antibiotic. Catalyzes the Claisen condensation of four molecules of malonyl-CoA to yield 3,5-dihydroxyphenylacetyl-CoA (DPA-CoA) and three free coenzyme A (CoA). DpgA requires the presence of the dehydratases DpgB and DpgD to facilitate the aromatization of the DPA-S-DgpA or DPA-S-CoA intermediate. The sequence is that of 3,5-dihydroxyphenylacetyl-CoA synthase from Amycolatopsis balhimycina.